The following is a 318-amino-acid chain: NAC domain-containing protein 59 (318 aa).

Residues 24–174 (LPPGFRFHPT…ECVISRVFHT (151 aa)) enclose the NAC domain. A DNA-binding region spans residues 121-180 (VGMKKTLVFYKGRAPKGVKTNWVMHEYRLEGKFAIDNLSKTAKNECVISRVFHTRTDGTK).

As to expression, mostly expressed in root cortex, phloem, atrichoblast and quiescent center (QC), and, to a lower extent, in root endodermis, xylem, pericycle, columella and lateral root cap (LRC). Expressed in roots, cotyledons, very young leaves, senescing leaves, mature flowers and pollen.

The protein resides in the nucleus. Transcription activator that binds to DNA in promoters of target genes on a specific bipartite motif 5'-[AG]CGT[AG](4-5n)[AG][CT]ACGCAA-3'. Triggers the expression of senescence-associated genes during age-, salt- and dark-induced senescence through a regulatory network that may involve cross-talk with salt- and H(2)O(2)-dependent signaling pathways. This Arabidopsis thaliana (Mouse-ear cress) protein is NAC domain-containing protein 59.